The chain runs to 93 residues: Small ribosomal subunit protein bS20 (93 aa).

Belongs to the bacterial ribosomal protein bS20 family.

In terms of biological role, binds directly to 16S ribosomal RNA. In Dictyoglomus thermophilum (strain ATCC 35947 / DSM 3960 / H-6-12), this protein is Small ribosomal subunit protein bS20.